A 524-amino-acid chain; its full sequence is Coatomer subunit delta-1 (524 aa).

The disordered stretch occupies residues Met215–Leu244. An MHD domain is found at Ser283–Val524.

The protein belongs to the adaptor complexes medium subunit family. Delta-COP subfamily. Oligomeric complex that consists of at least the alpha, beta, beta', gamma, delta, epsilon and zeta subunits.

The protein localises to the cytoplasm. Its subcellular location is the golgi apparatus membrane. The protein resides in the cytoplasmic vesicle. It localises to the COPI-coated vesicle membrane. Its function is as follows. The coatomer is a cytosolic protein complex that binds to dilysine motifs and reversibly associates with Golgi non-clathrin-coated vesicles, which further mediate biosynthetic protein transport from the ER, via the Golgi up to the trans Golgi network. Coatomer complex is required for budding from Golgi membranes, and is essential for the retrograde Golgi-to-ER transport of dilysine-tagged proteins. The sequence is that of Coatomer subunit delta-1 from Oryza sativa subsp. japonica (Rice).